A 236-amino-acid polypeptide reads, in one-letter code: 5'-methylthioadenosine/S-adenosylhomocysteine nucleosidase (236 aa).

The active-site Proton acceptor is Glu-12. Residues Gly-78, Ile-153, and 174-175 contribute to the substrate site; that span reads ME. The active-site Proton donor is Asp-198.

This sequence belongs to the PNP/UDP phosphorylase family. MtnN subfamily.

It carries out the reaction S-adenosyl-L-homocysteine + H2O = S-(5-deoxy-D-ribos-5-yl)-L-homocysteine + adenine. The catalysed reaction is S-methyl-5'-thioadenosine + H2O = 5-(methylsulfanyl)-D-ribose + adenine. The enzyme catalyses 5'-deoxyadenosine + H2O = 5-deoxy-D-ribose + adenine. The protein operates within amino-acid biosynthesis; L-methionine biosynthesis via salvage pathway; S-methyl-5-thio-alpha-D-ribose 1-phosphate from S-methyl-5'-thioadenosine (hydrolase route): step 1/2. Functionally, catalyzes the irreversible cleavage of the glycosidic bond in both 5'-methylthioadenosine (MTA) and S-adenosylhomocysteine (SAH/AdoHcy) to adenine and the corresponding thioribose, 5'-methylthioribose and S-ribosylhomocysteine, respectively. Also cleaves 5'-deoxyadenosine, a toxic by-product of radical S-adenosylmethionine (SAM) enzymes, into 5-deoxyribose and adenine. This is 5'-methylthioadenosine/S-adenosylhomocysteine nucleosidase from Shewanella baltica (strain OS155 / ATCC BAA-1091).